Consider the following 811-residue polypeptide: Glycerol-3-phosphate acyltransferase (811 aa).

The short motif at 308–313 (CHRSHM) is the HXXXXD motif element.

This sequence belongs to the GPAT/DAPAT family.

Its subcellular location is the cell inner membrane. The catalysed reaction is sn-glycerol 3-phosphate + an acyl-CoA = a 1-acyl-sn-glycero-3-phosphate + CoA. The protein operates within phospholipid metabolism; CDP-diacylglycerol biosynthesis; CDP-diacylglycerol from sn-glycerol 3-phosphate: step 1/3. This is Glycerol-3-phosphate acyltransferase from Pseudoalteromonas atlantica (strain T6c / ATCC BAA-1087).